Consider the following 333-residue polypeptide: MRIWWLLLAIEICTGNINSQDTCRQGHPGIPGNPGHNGLPGRDGRDGAKGDKGDAGEPGCPGSPGKDGTSGEKGERGADGKVEAKGIKGDQGSRGSPGKHGPKGLAGPMGEKGLRGETGPQGQKGNKGDVGPTGPEGPRGNIGPLGPTGLPGPMGPIGKPGPKGEAGPTGPQGEPGVRGIRGWKGDRGEKGKIGETLVLPKSAFTVGLTVLSKFPSSDVPIKFDKILYNEFNHYDTAVGKFTCHIAGVYYFTYHITVFSRNVQVSLVKNGVKILHTRDAYVSSEDQASGSIVLQLKLGDEMWLQVTGGERFNGLFADEDDDTTFTGFLLFSSQ.

Residues 1-19 (MRIWWLLLAIEICTGNINS) form the signal peptide. 3 consecutive Collagen-like domains span residues 24–82 (RQGH…DGKV), 95–154 (GSPG…PGPM), and 155–191 (GPIG…GEKG). The segment at 24–189 (RQGHPGIPGN…IRGWKGDRGE (166 aa)) is disordered. Over residues 26 to 40 (GHPGIPGNPGHNGLP) the composition is skewed to low complexity. 2 stretches are compositionally biased toward basic and acidic residues: residues 42–55 (RDGR…KGDA) and 69–88 (TSGE…KGIK). Residues 197 to 333 (LVLPKSAFTV…FTGFLLFSSQ (137 aa)) enclose the C1q domain.

Interacts with CTRP9A and ADIPOQ. Forms heterotrimers and heterooligomeric complexes with CTRP9A. Expressed at low levels. Not expressed in adipose tissues.

Its subcellular location is the secreted. In terms of biological role, probable adipokine. Activates AMPK, AKT, and p44/42 MAPK signaling pathways. This chain is Complement C1q and tumor necrosis factor-related protein 9B (C1QTNF9B), found in Homo sapiens (Human).